The primary structure comprises 320 residues: Acetyl-coenzyme A carboxylase carboxyl transferase subunit beta (320 aa).

The region spanning 25–294 (VWTKCDSCGQ…AKDEDELLGE (270 aa)) is the CoA carboxyltransferase N-terminal domain. Cys-29, Cys-32, Cys-48, and Cys-51 together coordinate Zn(2+). The C4-type zinc-finger motif lies at 29–51 (CDSCGQVLYRAELERNLEVCPKC). Residues 295–310 (EMIADDIESSDNEPEI) show a composition bias toward acidic residues. Residues 295 to 320 (EMIADDIESSDNEPEINIETNKKEDV) are disordered.

It belongs to the AccD/PCCB family. Acetyl-CoA carboxylase is a heterohexamer composed of biotin carboxyl carrier protein (AccB), biotin carboxylase (AccC) and two subunits each of ACCase subunit alpha (AccA) and ACCase subunit beta (AccD). Requires Zn(2+) as cofactor.

It localises to the cytoplasm. The enzyme catalyses N(6)-carboxybiotinyl-L-lysyl-[protein] + acetyl-CoA = N(6)-biotinyl-L-lysyl-[protein] + malonyl-CoA. It functions in the pathway lipid metabolism; malonyl-CoA biosynthesis; malonyl-CoA from acetyl-CoA: step 1/1. Functionally, component of the acetyl coenzyme A carboxylase (ACC) complex. Biotin carboxylase (BC) catalyzes the carboxylation of biotin on its carrier protein (BCCP) and then the CO(2) group is transferred by the transcarboxylase to acetyl-CoA to form malonyl-CoA. The polypeptide is Acetyl-coenzyme A carboxylase carboxyl transferase subunit beta (Proteus mirabilis (strain HI4320)).